The sequence spans 78 residues: Putative membrane protein insertion efficiency factor (78 aa).

Belongs to the UPF0161 family.

Its subcellular location is the cell inner membrane. Could be involved in insertion of integral membrane proteins into the membrane. The chain is Putative membrane protein insertion efficiency factor from Prochlorococcus marinus subsp. pastoris (strain CCMP1986 / NIES-2087 / MED4).